The sequence spans 604 residues: uncharacterized protein (604 aa).

Positions Leu45–Met329 constitute an ABC transmembrane type-1 domain. Transmembrane regions (helical) follow at residues Phe49–Tyr69, Leu82–Val102, Val162–Leu182, Pro184–Leu204, Leu273–Ile293, and Thr297–Ile317. One can recognise an ABC transporter domain in the interval Ile363–Ala597. Gly396–Thr403 contributes to the ATP binding site.

The protein belongs to the ABC transporter superfamily.

It is found in the cell membrane. This is an uncharacterized protein from Bacillus subtilis (strain 168).